The primary structure comprises 275 residues: MPELPEVETVRRGLETLVLGQEIVAVTLKVPKMVKTDLETFALTLPGQIIQSVGRRGKYLLIDLGQLVLVSHLRMEGKYLLFPDEVPDNKHFHVFFELKNGSTLVYQDVRKFGTFDLIAKSQLSAFFAKRKLGPEPKKETFKLKTFEAALLSSQKPIKPHLLDQTLVAGLGNIYVDEVLWAAKVHPETASSRLNKAEIKRLHDETIRILALGIEKGGSTVRTYRNALGADGTMQDYLQVYGQTGKSCPRCGQAIVKLKVGGRGTHICPKCQKKRP.

The Schiff-base intermediate with DNA role is filled by proline 2. Glutamate 3 (proton donor) is an active-site residue. Lysine 58 functions as the Proton donor; for beta-elimination activity in the catalytic mechanism. The DNA site is built by histidine 91 and arginine 110. An FPG-type zinc finger spans residues 238 to 272 (QVYGQTGKSCPRCGQAIVKLKVGGRGTHICPKCQK). Catalysis depends on arginine 262, which acts as the Proton donor; for delta-elimination activity.

Belongs to the FPG family. Monomer. The cofactor is Zn(2+).

The catalysed reaction is Hydrolysis of DNA containing ring-opened 7-methylguanine residues, releasing 2,6-diamino-4-hydroxy-5-(N-methyl)formamidopyrimidine.. It carries out the reaction 2'-deoxyribonucleotide-(2'-deoxyribose 5'-phosphate)-2'-deoxyribonucleotide-DNA = a 3'-end 2'-deoxyribonucleotide-(2,3-dehydro-2,3-deoxyribose 5'-phosphate)-DNA + a 5'-end 5'-phospho-2'-deoxyribonucleoside-DNA + H(+). Its function is as follows. Involved in base excision repair of DNA damaged by oxidation or by mutagenic agents. Acts as a DNA glycosylase that recognizes and removes damaged bases. Has a preference for oxidized purines, such as 7,8-dihydro-8-oxoguanine (8-oxoG). Has AP (apurinic/apyrimidinic) lyase activity and introduces nicks in the DNA strand. Cleaves the DNA backbone by beta-delta elimination to generate a single-strand break at the site of the removed base with both 3'- and 5'-phosphates. The polypeptide is Formamidopyrimidine-DNA glycosylase (Streptococcus pyogenes serotype M3 (strain ATCC BAA-595 / MGAS315)).